The primary structure comprises 69 residues: Large ribosomal subunit protein bL31 (69 aa).

Positions 16, 18, 36, and 39 each coordinate Zn(2+).

Belongs to the bacterial ribosomal protein bL31 family. Type A subfamily. Part of the 50S ribosomal subunit. Zn(2+) is required as a cofactor.

Its function is as follows. Binds the 23S rRNA. The polypeptide is Large ribosomal subunit protein bL31 (Thermosipho africanus (strain TCF52B)).